The following is a 640-amino-acid chain: Auxin efflux carrier component 3 (640 aa).

Over 1–7 (MISWHDL) the chain is Extracellular. A helical membrane pass occupies residues 8–28 (YTVLTAVIPLYVAMILAYGSV). At 29–38 (RWWKIFSPDQ) the chain is on the cytoplasmic side. The helical transmembrane segment at 39–59 (CSGINRFVAIFAVPLLSFHFI) threads the bilayer. Val51 contributes to the (indol-3-yl)acetate binding site. Residues 60 to 71 (STNNPYAMNLRF) lie on the Extracellular side of the membrane. The chain crosses the membrane as a helical span at residues 72–92 (IAADTLQKIIMLSLLVLWANF). Residues 93–101 (TRSGSLEWS) are Cytoplasmic-facing. A helical membrane pass occupies residues 102 to 122 (ITIFSLSTLPNTLVMGIPLLI). Positions 112 and 114 each coordinate (indol-3-yl)acetate. At 123 to 131 (AMYGEYSGS) the chain is on the extracellular side. A helical membrane pass occupies residues 132–152 (LMVQIVVLQCIIWYTLLLFLF). Residue Tyr145 participates in (indol-3-yl)acetate binding. At 153–500 (EFRGAKMLIM…LIRNPNTYSS (348 aa)) the chain is on the cytoplasmic side. 3 positions are modified to phosphoserine: Ser226, Ser243, and Ser283. The disordered stretch occupies residues 310-351 (APNPEFSSTTTSTANKSVNKNPKDVNTNQQTTLPTGGKSNSH). Positions 314–348 (EFSSTTTSTANKSVNKNPKDVNTNQQTTLPTGGKS) are enriched in polar residues. Thr322 bears the Phosphothreonine mark. Residue Ser366 is modified to Phosphoserine. Disordered regions lie at residues 372-391 (AGLNVFGGAPDNDQGGRSDQ) and 404-471 (SHNG…SQRK). A compositionally biased stretch (basic and acidic residues) spans 430–442 (GKEEEAERPKDAE). Residues 449 to 460 (APNSTAALQSKT) show a composition bias toward polar residues. The chain crosses the membrane as a helical span at residues 501 to 521 (LIGLIWALVAFRWHVAMPKII). Over 522–524 (QQS) the chain is Extracellular. A helical membrane pass occupies residues 525-545 (ISILSDAGLGMAMFSLGLFMA). At 546–559 (LQPKLIACGNSVAT) the chain is on the cytoplasmic side. A helical transmembrane segment spans residues 560-580 (FAMAVRFLTGPAVMAVAAIAI). The Extracellular portion of the chain corresponds to 581-585 (GLRGD). Residues 586 to 606 (LLRVAIVQAALPQGIVPFVFA) traverse the membrane as a helical segment. (indol-3-yl)acetate contacts are provided by Ile600 and Val601. The Cytoplasmic portion of the chain corresponds to 607 to 619 (KEYNVHPAILSTG). A helical transmembrane segment spans residues 620–640 (VIFGMLIALPITLVYYILLGL).

Belongs to the auxin efflux carrier (TC 2.A.69.1) family. As to quaternary structure, homodimer. As to expression, predominantly expressed at the lateral side of shoot endodermis cells as well as root pericycle and columella cells.

It is found in the cell membrane. Auxin efflux carrier activity is competitively inhibited by naptalamate (N-1-naphthylphthalamic acid, NPA). Acts as a component of the auxin efflux carrier; this activity is enhanced when activated by PID-mediated phosphorylation. Seems to be involved in the lateral auxin transport system. Together with PIN4 and PIN7, involved in the connective auxin transport (CAT) that ensures communication across the shoot system, and modulates strigolactone-mediated shoot branching control. Binds auxins including indole-3-acetic acid (IAA). Coordinated polar localization of PIN3 is directly regulated by the vesicle trafficking process. This chain is Auxin efflux carrier component 3, found in Arabidopsis thaliana (Mouse-ear cress).